Reading from the N-terminus, the 225-residue chain is 2-phytyl-1,4-naphtoquinone methyltransferase (225 aa).

It belongs to the class I-like SAM-binding methyltransferase superfamily. MenG/UbiE family.

It carries out the reaction demethylphylloquinol + S-adenosyl-L-methionine = phylloquinol + S-adenosyl-L-homocysteine + H(+). It functions in the pathway cofactor biosynthesis; phylloquinone biosynthesis. Its function is as follows. Methyltransferase required for the conversion of 2-phytyl-1,4-beta-naphthoquinol to phylloquinol. This chain is 2-phytyl-1,4-naphtoquinone methyltransferase, found in Thermosynechococcus vestitus (strain NIES-2133 / IAM M-273 / BP-1).